A 370-amino-acid polypeptide reads, in one-letter code: Actin-related protein 2/3 complex subunit 1A (370 aa).

WD repeat units follow at residues 6–45 (FLLE…WVKA), 50–89 (EHNG…WKPT), 140–179 (PIRS…VDEK), 202–241 (GTGG…QVST), 244–284 (TEFL…TFVS), and 322–365 (LHQN…SSIQ).

Belongs to the WD repeat ARPC1 family. Probable component of the Arp2/3 complex in which it may replace ARPC1B. In addition to its role in the cytoplasmic cytoskeleton, the Arp2/3 complex also promotes actin polymerization in the nucleus, thereby regulating gene transcription and repair of damaged DNA.

The protein resides in the cytoplasm. The protein localises to the cytoskeleton. It localises to the nucleus. In terms of biological role, probably functions as a component of the Arp2/3 complex which is involved in regulation of actin polymerization and together with an activating nucleation-promoting factor (NPF) mediates the formation of branched actin networks. This is Actin-related protein 2/3 complex subunit 1A (ARPC1A) from Homo sapiens (Human).